Consider the following 207-residue polypeptide: Peptidyl-tRNA hydrolase (207 aa).

Tyrosine 15 contributes to the tRNA binding site. Catalysis depends on histidine 20, which acts as the Proton acceptor. Positions 66, 68, and 114 each coordinate tRNA. The interval 187–207 (HTTKPPRPKPARPATAESDKG) is disordered. The span at 198–207 (RPATAESDKG) shows a compositional bias: low complexity.

This sequence belongs to the PTH family. As to quaternary structure, monomer.

Its subcellular location is the cytoplasm. It carries out the reaction an N-acyl-L-alpha-aminoacyl-tRNA + H2O = an N-acyl-L-amino acid + a tRNA + H(+). Functionally, hydrolyzes ribosome-free peptidyl-tRNAs (with 1 or more amino acids incorporated), which drop off the ribosome during protein synthesis, or as a result of ribosome stalling. In terms of biological role, catalyzes the release of premature peptidyl moieties from peptidyl-tRNA molecules trapped in stalled 50S ribosomal subunits, and thus maintains levels of free tRNAs and 50S ribosomes. In Delftia acidovorans (strain DSM 14801 / SPH-1), this protein is Peptidyl-tRNA hydrolase.